A 132-amino-acid chain; its full sequence is uncharacterized protein (132 aa).

This sequence belongs to the mycobacterial PPE family.

This is an uncharacterized protein from Mycobacterium tuberculosis (strain ATCC 25618 / H37Rv).